An 888-amino-acid chain; its full sequence is Glutamate receptor 3 (888 aa).

Residues 1-22 (MGQSVLRAVFFLVLGLLGHSHG) form the signal peptide. The Extracellular segment spans residues 23–546 (GFPNTISIGG…GVFSFLDPLA (524 aa)). N-linked (GlcNAc...) asparagine glycans are attached at residues N57, N260, N374, N409, and N416. Residues C85 and C334 are joined by a disulfide bond. P502, T504, and R509 together coordinate L-glutamate. Residues 547-567 (YEIWMCIVFAYIGVSVVLFLV) traverse the membrane as a helical segment. Topologically, residues 568–596 (SRFSPYEWHLEDNNEEPRDPQSPPDPPNE) are cytoplasmic. The segment at residues 597 to 612 (FGIFNSLWFSLGAFMQ) is an intramembrane region (helical; Pore-forming). The stretch at 613-615 (QGC) is an intramembrane region. C615 carries the S-palmitoyl cysteine lipid modification. Residues 616–621 (DISPRS) are Cytoplasmic-facing. A helical membrane pass occupies residues 622 to 642 (LSGRIVGGVWWFFTLIIISSY). Topologically, residues 643 to 817 (TANLAAFLTV…DKTSALSLSN (175 aa)) are extracellular. The L-glutamate site is built by S680, T681, and E731. Residues C744 and C799 are joined by a disulfide bond. The helical transmembrane segment at 818 to 838 (VAGVFYILVGGLGLAMMVALI) threads the bilayer. Residues 839-888 (EFCYKSRAESKRMKLTKNTQNFKPAPATNTQNYATYREGYNVYGTESVKI) are Cytoplasmic-facing. C841 carries the S-palmitoyl cysteine lipid modification. 2 positions are modified to phosphotyrosine: Y871 and Y881.

Belongs to the glutamate-gated ion channel (TC 1.A.10.1) family. GRIA3 subfamily. Homotetramer or heterotetramer of pore-forming glutamate receptor subunits. Tetramers may be formed by the dimerization of dimers. Interacts with PICK1, GRIP1 and GRIP2. Found in a complex with GRIA1, GRIA2, GRIA4, CNIH2, CNIH3, CACNG2, CACNG3, CACNG4, CACNG5, CACNG7 and CACNG8. Interacts with CACNG5. Found in a complex with GRIA1, GRIA2, GRIA4, DLG4, CACNG8 and CNIH2.

The protein localises to the cell membrane. The protein resides in the postsynaptic cell membrane. Its subcellular location is the postsynaptic density membrane. It catalyses the reaction Ca(2+)(in) = Ca(2+)(out). Ionotropic glutamate receptor that functions as a ligand-gated cation channel, gated by L-glutamate and glutamatergic agonists such as alpha-amino-3-hydroxy-5-methyl-4-isoxazolepropionic acid (AMPA), quisqualic acid, and kainic acid. L-glutamate acts as an excitatory neurotransmitter at many synapses in the central nervous system and plays an important role in fast excitatory synaptic transmission by inducing long-term potentiation. Binding of the excitatory neurotransmitter L-glutamate induces a conformation change, leading to the opening of the cation channel, and thereby converts the chemical signal to an electrical impulse upon entry of calcium. The receptor then desensitizes rapidly and enters a transient inactive state, characterized by the presence of bound agonist. In the presence of CACNG8, shows resensitization which is characterized by a delayed accumulation of current flux upon continued application of glutamate. The protein is Glutamate receptor 3 of Mus musculus (Mouse).